We begin with the raw amino-acid sequence, 54 residues long: Potassium channel toxin alpha-KTx 14.5 (54 aa).

The N-terminal stretch at 1-23 (MKIFFAILLILAVCSMAIWTVNG) is a signal peptide. 3 disulfides stabilise this stretch: C30–C46, C36–C51, and C40–C53.

The protein belongs to the short scorpion toxin superfamily. Potassium channel inhibitor family. Alpha-KTx 14 subfamily. As to expression, expressed by the venom gland.

Its subcellular location is the secreted. In terms of biological role, inhibits potassium channels. May be active towards small conductance calcium-activated potassium channels (KCNN, SK), and less active towards voltage-gated potassium channels (Kv/KCN). This Mesobuthus gibbosus (Mediterranean checkered scorpion) protein is Potassium channel toxin alpha-KTx 14.5.